Consider the following 66-residue polypeptide: Large ribosomal subunit protein uL29 (66 aa).

Belongs to the universal ribosomal protein uL29 family.

In Helicobacter pylori (strain Shi470), this protein is Large ribosomal subunit protein uL29.